The following is a 32-amino-acid chain: Islet amyloid polypeptide (32 aa).

This sequence belongs to the calcitonin family. Can form homodimers. Interacts with IDE and INS. Interaction with INS inhibits homodimerization and fibril formation.

It is found in the secreted. Functionally, amylin/IAPP is a glucoregulatory peptide hormone that plays an important role in the regulation of energy homeostasis. Selectively inhibits insulin-stimulated glucose utilization and glycogen deposition in muscle, while not affecting adipocyte glucose metabolism. IAPP function is mediated by the CALCR-RAMPs (AMYRs) receptor complexes. Amylin can also bind CALCR receptor in the absence of RAMPs, although it is more selective for AMYRs. The chain is Islet amyloid polypeptide (IAPP) from Saguinus oedipus (Cotton-top tamarin).